The sequence spans 382 residues: RNA binding protein fox-1 homolog 1-like (382 aa).

2 disordered regions span residues 34–79 and 94–148; these read QEAG…AAHP and GPQH…QPKR. Pro residues predominate over residues 49-65; sequence YAPPPSYPPPGQAPPTP. Residues 101–110 are compositionally biased toward polar residues; the sequence is ESITASNTDD. Positions 147-223 constitute an RRM domain; the sequence is KRLHVSNIPF…RKIEVNNATA (77 aa).

In terms of tissue distribution, expressed during muscle development in adaxial cells, somites, cardiac precursors, finbuds and jaw muscle cells.

It localises to the nucleus. Its function is as follows. RNA-binding protein that regulates alternative splicing events by binding to 5'-GCAUG-3' elements. Regulates alternative splicing of tissue-specific exons. This is RNA binding protein fox-1 homolog 1-like (rbfox1l) from Danio rerio (Zebrafish).